Reading from the N-terminus, the 245-residue chain is MSVYAIIGGTGLTQLEGLTLSESLPIETPYGAPSAPLQRGRYAGREVLFLARHGHPHRFPPHQVNYRANLWALKQAGAEAVIAVNAVGGIHAAMGTGHLCVPHQLIDYTSGREHTYFAGDIEHVTHIDFSHPYDEPLRQRLIEALRALGLAHSSHGVYACTQGPRLETVAEIARLERDGNDIVGMTGMPEAALARELDLPYACLALVVNPAAGKSAGIITMAEIEQALHDGIGKVREVLARVLAG.

Phosphate-binding positions include T10 and 52 to 53 (RH). Residue M185 participates in substrate binding. Residue T186 coordinates phosphate. 209–211 (NPA) lines the substrate pocket.

This sequence belongs to the PNP/MTAP phosphorylase family. MTAP subfamily. Homotrimer.

It carries out the reaction S-methyl-5'-thioinosine + phosphate = 5-(methylsulfanyl)-alpha-D-ribose 1-phosphate + hypoxanthine. The protein operates within purine metabolism; purine nucleoside salvage. Catalyzes the reversible phosphorylation of S-methyl-5'-thioinosine (MTI) to hypoxanthine and 5-methylthioribose-1-phosphate. Involved in the breakdown of S-methyl-5'-thioadenosine (MTA), a major by-product of polyamine biosynthesis. Catabolism of (MTA) occurs via deamination to MTI and phosphorolysis to hypoxanthine. Involved in quorum sensing. This Pseudomonas aeruginosa (strain ATCC 15692 / DSM 22644 / CIP 104116 / JCM 14847 / LMG 12228 / 1C / PRS 101 / PAO1) protein is S-methyl-5'-thioinosine phosphorylase.